Here is a 297-residue protein sequence, read N- to C-terminus: Haloalkane dehalogenase (297 aa).

The AB hydrolase-1 domain maps to 47-148 (PPIVLLHGEP…AIARLVVANG (102 aa)). The active-site Nucleophile is Asp-123. Residue Asp-250 is the Proton donor of the active site. His-279 acts as the Proton acceptor in catalysis.

It belongs to the haloalkane dehalogenase family. Type 1 subfamily. As to quaternary structure, monomer.

The catalysed reaction is 1-haloalkane + H2O = a halide anion + a primary alcohol + H(+). Functionally, catalyzes hydrolytic cleavage of carbon-halogen bonds in halogenated aliphatic compounds, leading to the formation of the corresponding primary alcohols, halide ions and protons. The sequence is that of Haloalkane dehalogenase from Mycobacterium marinum (strain ATCC BAA-535 / M).